The chain runs to 285 residues: Golgi phosphoprotein 3-like (285 aa).

The tract at residues 1–43 is disordered; sequence MTTLTHRTRRTEVSKSCEKKIESEEDTNQERSPDNEDPGDSKD. Residues 10–43 are compositionally biased toward basic and acidic residues; sequence RTEVSKSCEKKIESEEDTNQERSPDNEDPGDSKD. A 1,2-diacyl-sn-glycero-3-phospho-(1D-myo-inositol 4-phosphate) is bound by residues tryptophan 67 and arginine 76. Residue serine 112 is modified to Phosphoserine. Arginine 157 and arginine 160 together coordinate a 1,2-diacyl-sn-glycero-3-phospho-(1D-myo-inositol 4-phosphate). Residues 176-187 form a beta-hairpin required for oligomerization region; sequence EKQNFLLFDMTT.

This sequence belongs to the GOLPH3/VPS74 family. As to quaternary structure, homooligomer. Does not interact MYO18; differs from GOLPH3 by its inability to interact with MYO18. May interact with ARF1.

It is found in the golgi apparatus. The protein localises to the golgi stack membrane. It localises to the trans-Golgi network membrane. In terms of biological role, phosphatidylinositol-4-phosphate-binding protein that may antagonize the action of GOLPH3 which is required for the process of vesicle budding at the Golgi and anterograde transport to the plasma membrane. This Rattus norvegicus (Rat) protein is Golgi phosphoprotein 3-like (Golph3l).